The chain runs to 60 residues: UPF0434 protein Mfla_2088 (60 aa).

This sequence belongs to the UPF0434 family.

The chain is UPF0434 protein Mfla_2088 from Methylobacillus flagellatus (strain ATCC 51484 / DSM 6875 / VKM B-1610 / KT).